A 158-amino-acid chain; its full sequence is SsrA-binding protein (158 aa).

This sequence belongs to the SmpB family.

It localises to the cytoplasm. Required for rescue of stalled ribosomes mediated by trans-translation. Binds to transfer-messenger RNA (tmRNA), required for stable association of tmRNA with ribosomes. tmRNA and SmpB together mimic tRNA shape, replacing the anticodon stem-loop with SmpB. tmRNA is encoded by the ssrA gene; the 2 termini fold to resemble tRNA(Ala) and it encodes a 'tag peptide', a short internal open reading frame. During trans-translation Ala-aminoacylated tmRNA acts like a tRNA, entering the A-site of stalled ribosomes, displacing the stalled mRNA. The ribosome then switches to translate the ORF on the tmRNA; the nascent peptide is terminated with the 'tag peptide' encoded by the tmRNA and targeted for degradation. The ribosome is freed to recommence translation, which seems to be the essential function of trans-translation. The sequence is that of SsrA-binding protein from Saccharopolyspora erythraea (strain ATCC 11635 / DSM 40517 / JCM 4748 / NBRC 13426 / NCIMB 8594 / NRRL 2338).